A 78-amino-acid polypeptide reads, in one-letter code: Putative membrane protein insertion efficiency factor (78 aa).

It belongs to the UPF0161 family.

The protein resides in the cell inner membrane. Its function is as follows. Could be involved in insertion of integral membrane proteins into the membrane. This Prochlorococcus marinus (strain MIT 9301) protein is Putative membrane protein insertion efficiency factor.